We begin with the raw amino-acid sequence, 478 residues long: Zinc finger and SCAN domain-containing protein 26 (478 aa).

Lysine 17 participates in a covalent cross-link: Glycyl lysine isopeptide (Lys-Gly) (interchain with G-Cter in SUMO2). The 83-residue stretch at 51–133 (CKQFRQLRYE…VVLEDLQLDL (83 aa)) folds into the SCAN box domain. 2 disordered regions span residues 159–181 (GVQE…KGEE) and 200–226 (ESSG…AKPK). Basic and acidic residues-rich tracts occupy residues 164 to 181 (QVRH…KGEE) and 207 to 226 (EPME…AKPK). A C2H2-type 1; degenerate zinc finger spans residues 231–253 (YKCSEREQRFIQHLDLIEHASTH). 7 C2H2-type zinc fingers span residues 282–304 (HQCH…QKIH), 310–332 (YQCN…LRIH), 338–360 (YLCI…QRIH), 366–388 (CECK…QRIH), 394–416 (HQCN…HRIH), 422–444 (FKCN…VRIH), and 450–472 (YQCS…QRYH).

It localises to the nucleus. May be involved in transcriptional regulation. This chain is Zinc finger and SCAN domain-containing protein 26 (ZSCAN26), found in Homo sapiens (Human).